The sequence spans 546 residues: Intermembrane transport protein PqiB (546 aa).

The Cytoplasmic portion of the chain corresponds to 1 to 15; that stretch reads MESNNGEAKIQKVKN. The chain crosses the membrane as a helical span at residues 16–36; it reads WSPVWIFPIVTALIGAWVLFY. Topologically, residues 37–546 are periplasmic; it reads HYSHQGPEVT…KDPEPKRAKQ (510 aa). 3 MCE/MlaD regions span residues 42 to 133, 158 to 217, and 285 to 389; these read GPEV…LQPG, IRVI…NNVR, and HIDY…LDFY. Residues 437–464 adopt a coiled-coil conformation; the sequence is IEQATSTLSESQRTMKNLQTTLDSMNKI.

This sequence belongs to the PqiB family. As to quaternary structure, homohexamer. May form a complex composed of PqiA, PqiB and PqiC. Interacts with PqiC.

Its subcellular location is the cell inner membrane. Forms a tunnel that spans the entire periplasmic space. Could be implicated in lipid transport between the inner membrane and the outer membrane. Binds phospholipids. Required for outer membrane homeostasis. Contributes to membrane integrity. The protein is Intermembrane transport protein PqiB of Escherichia coli (strain K12).